The following is a 271-amino-acid chain: HTH-type transcriptional repressor AllR (271 aa).

One can recognise an HTH iclR-type domain in the interval 21–83 (AQALERGIAI…SQLGWWHIGL (63 aa)). Positions 43 to 62 (VSDISLNLDLPLSTTFRLLK) form a DNA-binding region, H-T-H motif. One can recognise an IclR-ED domain in the interval 98–267 (VLSVAGPFMR…ARDISTALGL (170 aa)). Glyoxylate-binding positions include 154–156 (SGA), aspartate 207, cysteine 217, and 234–236 (SIS).

In terms of biological role, negative regulator of allantoin and glyoxylate utilization operons. Binds to the gcl promoter and to the allS-allA intergenic region. In Escherichia coli O6:H1 (strain CFT073 / ATCC 700928 / UPEC), this protein is HTH-type transcriptional repressor AllR (allR).